The primary structure comprises 464 residues: Lysosomal dipeptide transporter MFSD1 (464 aa).

The Dileucine internalization motif motif lies at 11 to 12 (LL). Ser-20 is modified (phosphoserine). 12 helical membrane passes run 38 to 58 (LAHR…SYFC), 82 to 102 (LLYA…GFLI), 112 to 132 (TVIF…GGIF), 134 to 154 (AFWL…SLAV), 190 to 210 (LMGW…HMTL), 214 to 234 (LMIG…LAYL), 265 to 285 (LILV…FIGL), 303 to 323 (AINS…GLLV), 330 to 350 (IIWV…LAFT), 360 to 380 (LLGF…AFIV), 391 to 411 (FMQS…GMIL), and 417 to 437 (LLLE…VVCL).

It belongs to the major facilitator superfamily. As to quaternary structure, homodimer. Interacts with lysosomal protein GLMP (via lumenal domain); the interaction starts while both proteins are still in the endoplasmic reticulum and is required for stabilization of MFSD1 in lysosomes but has no direct effect on its targeting to lysosomes or transporter activity. Not N-glycosylated. In terms of tissue distribution, in brain, expressed in the cortex, striatum hippocampus, hypothalamus, thalamus and brainstem (at protein level). Widely expressed with highest levels in kidney and spleen (at protein level).

The protein localises to the lysosome membrane. It carries out the reaction L-alpha-aminoacyl-L-arginine(out) = L-alpha-aminoacyl-L-arginine(in). The enzyme catalyses L-arginyl-L-alpha-amino acid(out) = L-arginyl-L-alpha-amino acid(in). It catalyses the reaction L-arginyl-glycine(out) = L-arginyl-glycine(in). The catalysed reaction is L-alpha-aminoacyl-L-lysine(out) = L-alpha-aminoacyl-L-lysine(in). It carries out the reaction L-aspartyl-L-lysine(out) = L-aspartyl-L-lysine(in). The enzyme catalyses L-alanyl-L-lysine(out) = L-alanyl-L-lysine(in). It catalyses the reaction L-lysyl-L-alpha-amino acid(out) = L-lysyl-L-alpha-amino acid(in). The catalysed reaction is L-lysyl-L-alanine(out) = L-lysyl-L-alanine(in). It carries out the reaction L-lysyl-L-lysine(out) = L-lysyl-L-lysine(in). The enzyme catalyses L-lysyl-glycine(out) = L-lysyl-glycine(in). It catalyses the reaction L-alpha-aminoacyl-L-histidine(out) = L-alpha-aminoacyl-L-histidine(in). The catalysed reaction is L-histidyl-L-alpha-amino acid(out) = L-histidyl-L-alpha-amino acid(in). It carries out the reaction L-histidyl-glycine(out) = L-histidyl-glycine(in). Lysosomal dipeptide uniporter that selectively exports lysine, arginine or histidine-containing dipeptides with a net positive charge from the lysosome lumen into the cytosol. Could play a role in a specific type of protein O-glycosylation indirectly regulating macrophages migration and tissue invasion. Also essential for liver homeostasis. The protein is Lysosomal dipeptide transporter MFSD1 of Mus musculus (Mouse).